The following is a 143-amino-acid chain: Pathogenesis-related protein P2 (143 aa).

The signal sequence occupies residues 1-23 (MERVNKLCVAFFVINMMMAVAAA). Residues 24–143 (QSATNVRATY…LNVNYEFVNC (120 aa)) form the Barwin domain. Intrachain disulfides connect cysteine 52-cysteine 84, cysteine 73-cysteine 107, and cysteine 87-cysteine 143.

It localises to the secreted. The protein localises to the cell wall. This chain is Pathogenesis-related protein P2, found in Solanum lycopersicum (Tomato).